The primary structure comprises 139 residues: SPbeta prophage-derived uncharacterized protein YomN (139 aa).

This Bacillus subtilis (strain 168) protein is SPbeta prophage-derived uncharacterized protein YomN (yomN).